We begin with the raw amino-acid sequence, 150 residues long: Endoribonuclease YbeY (150 aa).

Zn(2+) is bound by residues His-113, His-117, and His-123.

This sequence belongs to the endoribonuclease YbeY family. Zn(2+) is required as a cofactor.

The protein localises to the cytoplasm. In terms of biological role, single strand-specific metallo-endoribonuclease involved in late-stage 70S ribosome quality control and in maturation of the 3' terminus of the 16S rRNA. This chain is Endoribonuclease YbeY, found in Malacoplasma penetrans (strain HF-2) (Mycoplasma penetrans).